The following is a 243-amino-acid chain: tRNA (guanine-N(7)-)-methyltransferase (243 aa).

S-adenosyl-L-methionine contacts are provided by Glu74, Glu99, Asp126, and Asp149. Asp149 is a catalytic residue. Substrate-binding positions include Lys153, Asp185, and 221–224 (TKFE).

It belongs to the class I-like SAM-binding methyltransferase superfamily. TrmB family.

It carries out the reaction guanosine(46) in tRNA + S-adenosyl-L-methionine = N(7)-methylguanosine(46) in tRNA + S-adenosyl-L-homocysteine. It functions in the pathway tRNA modification; N(7)-methylguanine-tRNA biosynthesis. Its function is as follows. Catalyzes the formation of N(7)-methylguanine at position 46 (m7G46) in tRNA. The chain is tRNA (guanine-N(7)-)-methyltransferase from Psychromonas ingrahamii (strain DSM 17664 / CCUG 51855 / 37).